We begin with the raw amino-acid sequence, 261 residues long: Thiazole synthase (261 aa).

Lysine 102 functions as the Schiff-base intermediate with DXP in the catalytic mechanism. Residues glycine 163, 189–190, and 211–212 contribute to the 1-deoxy-D-xylulose 5-phosphate site; these read AG and NT.

This sequence belongs to the ThiG family. Homotetramer. Forms heterodimers with either ThiH or ThiS.

The protein localises to the cytoplasm. It catalyses the reaction [ThiS sulfur-carrier protein]-C-terminal-Gly-aminoethanethioate + 2-iminoacetate + 1-deoxy-D-xylulose 5-phosphate = [ThiS sulfur-carrier protein]-C-terminal Gly-Gly + 2-[(2R,5Z)-2-carboxy-4-methylthiazol-5(2H)-ylidene]ethyl phosphate + 2 H2O + H(+). Its pathway is cofactor biosynthesis; thiamine diphosphate biosynthesis. Its function is as follows. Catalyzes the rearrangement of 1-deoxy-D-xylulose 5-phosphate (DXP) to produce the thiazole phosphate moiety of thiamine. Sulfur is provided by the thiocarboxylate moiety of the carrier protein ThiS. In vitro, sulfur can be provided by H(2)S. The sequence is that of Thiazole synthase from Acinetobacter baumannii (strain AB307-0294).